The sequence spans 457 residues: Putative F-box protein At3g58860 (457 aa).

Residues 6–54 enclose the F-box domain; that stretch reads MDLFSKLPDEVISHILSSLPTKEAASTSVLAKKWRYLFAFVPSLDFNDS.

This is Putative F-box protein At3g58860 from Arabidopsis thaliana (Mouse-ear cress).